The following is a 155-amino-acid chain: Small ribosomal subunit protein uS15 (155 aa).

Residues 1–10 are compositionally biased toward basic residues; it reads MARMHTRRRG. The interval 1 to 66 is disordered; that stretch reads MARMHTRRRG…EGVQGTPVPD (66 aa). Residues 21 to 33 show a composition bias toward acidic residues; it reads EPPEWSDVDEDAI. Basic and acidic residues predominate over residues 34-45; the sequence is EERVVELAEQGH.

Belongs to the universal ribosomal protein uS15 family. As to quaternary structure, part of the 30S ribosomal subunit.

The polypeptide is Small ribosomal subunit protein uS15 (Halobacterium salinarum (strain ATCC 700922 / JCM 11081 / NRC-1) (Halobacterium halobium)).